The following is a 331-amino-acid chain: L-lactate dehydrogenase A chain (331 aa).

NAD(+) contacts are provided by residues 29 to 57 and Arg98; that span reads GMVG…MEDK. Positions 105, 137, and 168 each coordinate substrate. An NAD(+)-binding site is contributed by Asn137. His192 functions as the Proton acceptor in the catalytic mechanism. Substrate is bound at residue Thr247.

It belongs to the LDH/MDH superfamily. LDH family. In terms of assembly, homotetramer.

It localises to the cytoplasm. The catalysed reaction is (S)-lactate + NAD(+) = pyruvate + NADH + H(+). It functions in the pathway fermentation; pyruvate fermentation to lactate; (S)-lactate from pyruvate: step 1/1. Functionally, interconverts simultaneously and stereospecifically pyruvate and lactate with concomitant interconversion of NADH and NAD(+). The chain is L-lactate dehydrogenase A chain (ldha) from Harpagifer antarcticus (Antarctic spiny plunderfish).